The chain runs to 756 residues: 5-methyltetrahydropteroyltriglutamate--homocysteine methyltransferase (756 aa).

Residues 16 to 19 and Lys112 contribute to the 5-methyltetrahydropteroyltri-L-glutamate site; that span reads RELK. Residues 432–434 and Glu485 contribute to the L-homocysteine site; that span reads IGS. L-methionine-binding positions include 432 to 434 and Glu485; that span reads IGS. 5-methyltetrahydropteroyltri-L-glutamate is bound by residues 516–517 and Trp562; that span reads RC. Asp600 is a binding site for L-homocysteine. An L-methionine-binding site is contributed by Asp600. Position 606 (Glu606) interacts with 5-methyltetrahydropteroyltri-L-glutamate. His642, Cys644, and Glu666 together coordinate Zn(2+). The active-site Proton donor is His695. Cys727 contributes to the Zn(2+) binding site.

It belongs to the vitamin-B12 independent methionine synthase family. Requires Zn(2+) as cofactor.

The enzyme catalyses 5-methyltetrahydropteroyltri-L-glutamate + L-homocysteine = tetrahydropteroyltri-L-glutamate + L-methionine. The protein operates within amino-acid biosynthesis; L-methionine biosynthesis via de novo pathway; L-methionine from L-homocysteine (MetE route): step 1/1. Catalyzes the transfer of a methyl group from 5-methyltetrahydrofolate to homocysteine resulting in methionine formation. This Haemophilus influenzae (strain ATCC 51907 / DSM 11121 / KW20 / Rd) protein is 5-methyltetrahydropteroyltriglutamate--homocysteine methyltransferase.